The following is a 108-amino-acid chain: Tubulin-specific chaperone A (108 aa).

A2 is subject to N-acetylalanine.

It belongs to the TBCA family. Supercomplex made of cofactors A to E. Cofactors A and D function by capturing and stabilizing tubulin in a quasi-native conformation. Cofactor E binds to the cofactor D-tubulin complex; interaction with cofactor C then causes the release of tubulin polypeptides that are committed to the native state.

Its subcellular location is the cytoplasm. It localises to the cytoskeleton. In terms of biological role, tubulin-folding protein; involved in the early step of the tubulin folding pathway. The polypeptide is Tubulin-specific chaperone A (TBCA) (Gallus gallus (Chicken)).